Consider the following 535-residue polypeptide: Succinate-semialdehyde dehydrogenase, mitochondrial (535 aa).

The transit peptide at 1–47 (MATCFWLRSCGARRLGSTFPGCRLRPRAGGLVPASGPAPGPAQLRCY) directs the protein to the mitochondrion. Position 126 is an N6-acetyllysine; alternate (K126). Position 126 is an N6-succinyllysine; alternate (K126). N6-succinyllysine occurs at positions 135 and 184. Residues R213 and 228-231 (KPAE) contribute to the NAD(+) site. Residue R213 coordinates substrate. Position 265 is an N6-acetyllysine; alternate (K265). An N6-succinyllysine; alternate modification is found at K265. NAD(+) is bound at residue 284-289 (GSTTTG). The active-site Proton acceptor is E306. R334 contacts substrate. C340 serves as the catalytic Nucleophile. C340 and C342 are disulfide-bonded. N6-acetyllysine is present on K365. An N6-succinyllysine modification is found at K402. K411 is subject to N6-acetyllysine. A substrate-binding site is contributed by S498. S499 is modified (phosphoserine).

It belongs to the aldehyde dehydrogenase family. In terms of assembly, homotetramer.

The protein localises to the mitochondrion. The enzyme catalyses succinate semialdehyde + NAD(+) + H2O = succinate + NADH + 2 H(+). It participates in amino-acid degradation; 4-aminobutanoate degradation. Its activity is regulated as follows. Redox-regulated. Inhibited under oxydizing conditions. Functionally, catalyzes one step in the degradation of the inhibitory neurotransmitter gamma-aminobutyric acid (GABA). The polypeptide is Succinate-semialdehyde dehydrogenase, mitochondrial (ALDH5A1) (Hylobates lar (Lar gibbon)).